We begin with the raw amino-acid sequence, 183 residues long: uncharacterized protein (183 aa).

The next 4 helical transmembrane spans lie at 37 to 59 (LFGY…PRQF), 79 to 98 (AILL…VTSV), 110 to 132 (WRTF…VLVL), and 142 to 161 (AFYA…TYVF).

Its subcellular location is the cell membrane. This is an uncharacterized protein from Archaeoglobus fulgidus (strain ATCC 49558 / DSM 4304 / JCM 9628 / NBRC 100126 / VC-16).